We begin with the raw amino-acid sequence, 84 residues long: Large ribosomal subunit protein bL27 (84 aa).

Positions 1-22 (MAHKKAGGSTRNGRDSESKRLG) are disordered.

The protein belongs to the bacterial ribosomal protein bL27 family.

This is Large ribosomal subunit protein bL27 from Shewanella oneidensis (strain ATCC 700550 / JCM 31522 / CIP 106686 / LMG 19005 / NCIMB 14063 / MR-1).